The following is a 62-amino-acid chain: Large ribosomal subunit protein eL24 (62 aa).

Zn(2+)-binding residues include Cys-6, Cys-9, Cys-32, and Cys-36. The segment at 6–36 adopts a C4-type zinc-finger fold; the sequence is CSFCEGKIEPGCGKKYVKKDGSVMQFCSSKC.

Belongs to the eukaryotic ribosomal protein eL24 family. As to quaternary structure, part of the 50S ribosomal subunit. Forms a cluster with proteins L3 and L14. Requires Zn(2+) as cofactor.

In terms of biological role, binds to the 23S rRNA. This is Large ribosomal subunit protein eL24 from Methanococcus vannielii (strain ATCC 35089 / DSM 1224 / JCM 13029 / OCM 148 / SB).